Reading from the N-terminus, the 497-residue chain is MQNLNKTEKTFFGQPRGLLTLFQTEFWERFSYYGMRAILVYYLYALTTADNAGLGLPKAQAMAIVSIYGALVYLSTIVGGWVADRLLGASRTIFLGGILITLGHVALATPFGLSSLFVALFLIILGTGMLKPNISNMVGHLYSKDDSRRDTGFNIFVVGINMGSLIAPLIVGTVGQGVNYHLGFSLAAIGMIFALFAYWYGRLRHFPEIGREPSNPMDAKAKRNFIITLTIVLIVALIGFFLIYQASPANFINNFINVLSIIGIVVPIIYFVMMFTSKKVESDERRKLTAYIPLFLSAIVFWAIEEQSSTIIAVWGESRSNLNPTWFGFTFHIDPSWYQLLNPLFIVLLSPIFVRIWNKLGDRQPSTIVKFGLGLMLTGASYLIMTLPGLLNGTSGRASALWLVLMFAVQMAGELLVSPVGLSVSTKLAPVAFQSQMMAMWFLADSTSQAINAQITPIFKAATEVHFFAITGIIGIIVGIILLIIKKPILKLMGDVR.

Over Met1 to Arg36 the chain is Cytoplasmic. Residues Ala37–Gly55 form a helical membrane-spanning segment. The Extracellular segment spans residues Leu56–Ile64. The chain crosses the membrane as a helical span at residues Val65–Ala83. Over Asp84–Thr92 the chain is Cytoplasmic. The helical transmembrane segment at Ile93–Phe111 threads the bilayer. The Extracellular portion of the chain corresponds to Gly112–Ser115. Residues Leu116–Ile134 form a helical membrane-spanning segment. Residues Ser135–Asn154 lie on the Cytoplasmic side of the membrane. A helical membrane pass occupies residues Ile155–Thr173. Residues Val174–His181 are Extracellular-facing. A helical membrane pass occupies residues Leu182–Tyr200. The Cytoplasmic segment spans residues Gly201–Asn224. Residues Phe225–Ile243 traverse the membrane as a helical segment. The Extracellular segment spans residues Tyr244–Asn254. A helical transmembrane segment spans residues Phe255–Met273. Residues Met274–Pro293 are Cytoplasmic-facing. Residues Leu294–Ile312 traverse the membrane as a helical segment. At Ala313–Pro335 the chain is on the extracellular side. A helical membrane pass occupies residues Ser336–Val354. Residues Arg355–Gly372 lie on the Cytoplasmic side of the membrane. Residues Leu373 to Leu391 form a helical membrane-spanning segment. Over Asn392–Ser425 the chain is Extracellular. A helical transmembrane segment spans residues Thr426–Ala444. Over Asp445–Arg497 the chain is Cytoplasmic.

The protein belongs to the major facilitator superfamily. Proton-dependent oligopeptide transporter (POT/PTR) (TC 2.A.17) family.

It localises to the cell membrane. Proton-dependent uptake of di- or tri-peptides. This Lactococcus lactis subsp. cremoris (Streptococcus cremoris) protein is Di-/tripeptide transporter (dtpT).